Here is a 313-residue protein sequence, read N- to C-terminus: Methionyl-tRNA formyltransferase (313 aa).

113–116 (SLLP) contacts (6S)-5,6,7,8-tetrahydrofolate.

The protein belongs to the Fmt family.

The catalysed reaction is L-methionyl-tRNA(fMet) + (6R)-10-formyltetrahydrofolate = N-formyl-L-methionyl-tRNA(fMet) + (6S)-5,6,7,8-tetrahydrofolate + H(+). In terms of biological role, attaches a formyl group to the free amino group of methionyl-tRNA(fMet). The formyl group appears to play a dual role in the initiator identity of N-formylmethionyl-tRNA by promoting its recognition by IF2 and preventing the misappropriation of this tRNA by the elongation apparatus. In Francisella tularensis subsp. tularensis (strain FSC 198), this protein is Methionyl-tRNA formyltransferase.